Consider the following 159-residue polypeptide: NADH-quinone oxidoreductase subunit B (159 aa).

4 residues coordinate [4Fe-4S] cluster: Cys36, Cys37, Cys102, and Cys132.

The protein belongs to the complex I 20 kDa subunit family. NDH-1 is composed of 14 different subunits. Subunits NuoB, C, D, E, F, and G constitute the peripheral sector of the complex. The cofactor is [4Fe-4S] cluster.

The protein localises to the cell inner membrane. It carries out the reaction a quinone + NADH + 5 H(+)(in) = a quinol + NAD(+) + 4 H(+)(out). NDH-1 shuttles electrons from NADH, via FMN and iron-sulfur (Fe-S) centers, to quinones in the respiratory chain. Couples the redox reaction to proton translocation (for every two electrons transferred, four hydrogen ions are translocated across the cytoplasmic membrane), and thus conserves the redox energy in a proton gradient. The protein is NADH-quinone oxidoreductase subunit B of Delftia acidovorans (strain DSM 14801 / SPH-1).